Reading from the N-terminus, the 448-residue chain is UDP-N-acetylmuramoylalanine--D-glutamate ligase (448 aa).

112–118 contributes to the ATP binding site; the sequence is GSNAKST.

This sequence belongs to the MurCDEF family.

It is found in the cytoplasm. The catalysed reaction is UDP-N-acetyl-alpha-D-muramoyl-L-alanine + D-glutamate + ATP = UDP-N-acetyl-alpha-D-muramoyl-L-alanyl-D-glutamate + ADP + phosphate + H(+). Its pathway is cell wall biogenesis; peptidoglycan biosynthesis. In terms of biological role, cell wall formation. Catalyzes the addition of glutamate to the nucleotide precursor UDP-N-acetylmuramoyl-L-alanine (UMA). This is UDP-N-acetylmuramoylalanine--D-glutamate ligase from Acinetobacter baumannii (strain ACICU).